We begin with the raw amino-acid sequence, 576 residues long: TOX high mobility group box family member 3 (576 aa).

Disordered stretches follow at residues 189-258 (NLGG…PQKP), 422-443 (TMVG…QHQM), and 519-563 (LQHM…QIQS). The span at 204-215 (ASKSATPSPSSS) shows a compositional bias: low complexity. The segment covering 223 to 239 (EANRAIGEKRAAPDSGK) has biased composition (basic and acidic residues). Residues 240 to 250 (KPKTPKKKKKK) show a composition bias toward basic residues. A DNA-binding region (HMG box) is located at residues 255-323 (PQKPVSAYAL…EYLKALAAYR (69 aa)). Positions 428–443 (PSTQVSPSVQTQQHQM) are enriched in low complexity. Positions 528 to 542 (PSPRQHSPVASQITS) are enriched in polar residues. The span at 549–563 (SPQPASQQHQSQIQS) shows a compositional bias: low complexity.

Homodimer. Interacts with CREB1; the interaction is not depolarization dependent. Interacts with CREBBP (via C-terminus). Interacts (via HGM box) with CITED1 (via C-terminus); the interaction increases estrogen-response element (ERE)-dependent transcription and protection against cell death. Interacts with CREB1 (phosphorylated form). As to expression, expressed mainly in epithelial cells. Expressed in the central nervous system (CNS), in the ileum and within the brain in the frontal and occipital lobe.

The protein resides in the nucleus. In terms of biological role, transcriptional coactivator of the p300/CBP-mediated transcription complex. Activates transactivation through cAMP response element (CRE) sites. Protects against cell death by inducing antiapoptotic and repressing pro-apoptotic transcripts. Stimulates transcription from the estrogen-responsive or BCL-2 promoters. Required for depolarization-induced transcription activation of the C-FOS promoter in neurons. Associates with chromatin to the estrogen-responsive C3 promoter region. The sequence is that of TOX high mobility group box family member 3 (TOX3) from Homo sapiens (Human).